Here is a 570-residue protein sequence, read N- to C-terminus: Proline--tRNA ligase (570 aa).

This sequence belongs to the class-II aminoacyl-tRNA synthetase family. ProS type 1 subfamily. As to quaternary structure, homodimer.

Its subcellular location is the cytoplasm. It catalyses the reaction tRNA(Pro) + L-proline + ATP = L-prolyl-tRNA(Pro) + AMP + diphosphate. Catalyzes the attachment of proline to tRNA(Pro) in a two-step reaction: proline is first activated by ATP to form Pro-AMP and then transferred to the acceptor end of tRNA(Pro). As ProRS can inadvertently accommodate and process non-cognate amino acids such as alanine and cysteine, to avoid such errors it has two additional distinct editing activities against alanine. One activity is designated as 'pretransfer' editing and involves the tRNA(Pro)-independent hydrolysis of activated Ala-AMP. The other activity is designated 'posttransfer' editing and involves deacylation of mischarged Ala-tRNA(Pro). The misacylated Cys-tRNA(Pro) is not edited by ProRS. The sequence is that of Proline--tRNA ligase from Clostridium acetobutylicum (strain ATCC 824 / DSM 792 / JCM 1419 / IAM 19013 / LMG 5710 / NBRC 13948 / NRRL B-527 / VKM B-1787 / 2291 / W).